Here is a 199-residue protein sequence, read N- to C-terminus: HTH-type transcriptional regulator BetI (199 aa).

An HTH tetR-type domain is found at E8–L68. Residues S31 to F50 constitute a DNA-binding region (H-T-H motif).

The protein operates within amine and polyamine biosynthesis; betaine biosynthesis via choline pathway [regulation]. Repressor involved in the biosynthesis of the osmoprotectant glycine betaine. It represses transcription of the choline transporter BetT and the genes of BetAB involved in the synthesis of glycine betaine. This Vibrio campbellii (strain ATCC BAA-1116) protein is HTH-type transcriptional regulator BetI.